Consider the following 240-residue polypeptide: MRSGVIAQKLGMTRVFTDAGEHIPVTVLKLDGCQVVGHRTKEQNGYVAVQLGIGRAKVKNVSKAERGRFAVAKVEPKLKLAEFRVDDATLLPIGAEITADHFVVGQFVDVTGTSTGKGFAGAMKRWNFGGLRATHGVSISHRSHGSTGGRQDPGKTFKNKKMAGHLGTERVTTLNLRVVQTDVERGLILVEGAVPGTAGGWIYVRDAVKKHLPKEAPLPGKFRLANEGAEPAPATESAEG.

Disordered regions lie at residues 138-158 and 215-240; these read SISH…KTFK and EAPL…SAEG. The residue at position 151 (Q151) is an N5-methylglutamine.

Belongs to the universal ribosomal protein uL3 family. In terms of assembly, part of the 50S ribosomal subunit. Forms a cluster with proteins L14 and L19. In terms of processing, methylated by PrmB.

Functionally, one of the primary rRNA binding proteins, it binds directly near the 3'-end of the 23S rRNA, where it nucleates assembly of the 50S subunit. The polypeptide is Large ribosomal subunit protein uL3 (Beijerinckia indica subsp. indica (strain ATCC 9039 / DSM 1715 / NCIMB 8712)).